The sequence spans 399 residues: Argininosuccinate synthase (399 aa).

9–17 contacts ATP; sequence AYSGGLDTS. Y85 is a binding site for L-citrulline. G115 lines the ATP pocket. L-aspartate contacts are provided by T117, N121, and D122. L-citrulline is bound at residue N121. R125, S173, E258, and Y270 together coordinate L-citrulline.

It belongs to the argininosuccinate synthase family. Type 1 subfamily. In terms of assembly, homotetramer.

It is found in the cytoplasm. The catalysed reaction is L-citrulline + L-aspartate + ATP = 2-(N(omega)-L-arginino)succinate + AMP + diphosphate + H(+). It functions in the pathway amino-acid biosynthesis; L-arginine biosynthesis; L-arginine from L-ornithine and carbamoyl phosphate: step 2/3. The polypeptide is Argininosuccinate synthase (Streptococcus uberis (strain ATCC BAA-854 / 0140J)).